Consider the following 208-residue polypeptide: 3-demethoxyubiquinol 3-hydroxylase (208 aa).

Residues glutamate 57, glutamate 87, histidine 90, glutamate 139, glutamate 171, and histidine 174 each coordinate Fe cation.

The protein belongs to the COQ7 family. It depends on Fe cation as a cofactor.

The protein resides in the cell membrane. It carries out the reaction a 5-methoxy-2-methyl-3-(all-trans-polyprenyl)benzene-1,4-diol + AH2 + O2 = a 3-demethylubiquinol + A + H2O. It participates in cofactor biosynthesis; ubiquinone biosynthesis. In terms of biological role, catalyzes the hydroxylation of 2-nonaprenyl-3-methyl-6-methoxy-1,4-benzoquinol during ubiquinone biosynthesis. The polypeptide is 3-demethoxyubiquinol 3-hydroxylase (Verminephrobacter eiseniae (strain EF01-2)).